The sequence spans 384 residues: Putative RNA methyltransferase slr0064 (384 aa).

Positions 53 to 164 constitute a THUMP domain; it reads LLYRINLWSR…QNHCQLSLDS (112 aa).

The protein belongs to the methyltransferase superfamily.

The sequence is that of Putative RNA methyltransferase slr0064 from Synechocystis sp. (strain ATCC 27184 / PCC 6803 / Kazusa).